Consider the following 226-residue polypeptide: Ras-related protein Rab-32 (226 aa).

Residue Ala2 is modified to N-acetylalanine. GTP is bound by residues Val38, Gly39, Lys40, Thr41, Ser42, Ser53, Gln54, Tyr56, and Thr59. Position 41 (Thr41) interacts with Mg(2+). A Switch 1 motif is present at residues Gln50 to Phe64. Thr59 contacts Mg(2+). Ser73 carries the post-translational modification Phosphoserine. Asp83 is a Mg(2+) binding site. The GTP site is built by Gly86, Asn145, Lys146, Asp148, Ala177, and Lys178. Positions Gly86–Lys99 match the Switch 2 motif. The interval Asn180–Gln199 is PKA-RII subunit binding domain. The interval Pro202–Cys226 is disordered. Basic and acidic residues predominate over residues Asn206–Cys226. S-geranylgeranyl cysteine attachment occurs at residues Cys225 and Cys226.

This sequence belongs to the small GTPase superfamily. Rab family. As to quaternary structure, interacts with ANKRD27. A decreased interaction with ANKRD27 seen in the presence of SGSM2. Interacts with LRRK2 (via N-terminus); this interaction results in stimulation of RAB10 phosphorylation by LRRK2. The cofactor is Mg(2+).

It localises to the mitochondrion. The protein localises to the mitochondrion outer membrane. The protein resides in the cytoplasmic vesicle. It is found in the phagosome. Its subcellular location is the phagosome membrane. It localises to the melanosome. The protein localises to the melanosome membrane. It carries out the reaction GTP + H2O = GDP + phosphate + H(+). Regulated by guanine the nucleotide exchange factor (GEF) BLOC-3 complex composed of HPS1 and HPS4 which promote the exchange of bound GDP for free GTP. Regulated by the GTPase activating protein (GAP) SGSM2/RUTBC1 which increases the GTP hydrolysis activity. Inhibited by GDP dissociation inhibitors (GDIs) which prevent Rab-GDP dissociation. In terms of biological role, the small GTPases Rab are key regulators of intracellular membrane trafficking, from the formation of transport vesicles to their fusion with membranes. Rabs cycle between an inactive GDP-bound form and an active GTP-bound form that is able to recruit to membranes different set of downstream effectors directly responsible for vesicle formation, movement, tethering and fusion. Also acts as an A-kinase anchoring protein by binding to the type II regulatory subunit of protein kinase A and anchoring it to the mitochondrion. Also involved in synchronization of mitochondrial fission. Plays a role in the maturation of phagosomes that engulf pathogens, such as S.aureus and M.tuberculosis. Plays an important role in the control of melanin production and melanosome biogenesis. In concert with RAB38, regulates the proper trafficking of melanogenic enzymes TYR, TYRP1 and DCT/TYRP2 to melanosomes in melanocytes. Stimulates phosphorylation of RAB10 'Thr-73' by LRRK2. In Sus scrofa (Pig), this protein is Ras-related protein Rab-32 (RAB32).